We begin with the raw amino-acid sequence, 445 residues long: Tubulin beta-3 chain (445 aa).

The MREI motif motif lies at 1–4; the sequence is MREI. Glutamine 11, glutamate 69, serine 138, glycine 142, threonine 143, glycine 144, asparagine 204, and asparagine 226 together coordinate GTP. Position 69 (glutamate 69) interacts with Mg(2+). Residues 425–445 form a disordered region; it reads YQDATAEEEGEFEEEAEEEAE. Residues 429–445 show a composition bias toward acidic residues; that stretch reads TAEEEGEFEEEAEEEAE. Glutamate 438 carries the 5-glutamyl polyglutamate modification.

Belongs to the tubulin family. Dimer of alpha and beta chains. A typical microtubule is a hollow water-filled tube with an outer diameter of 25 nm and an inner diameter of 15 nM. Alpha-beta heterodimers associate head-to-tail to form protofilaments running lengthwise along the microtubule wall with the beta-tubulin subunit facing the microtubule plus end conferring a structural polarity. Microtubules usually have 13 protofilaments but different protofilament numbers can be found in some organisms and specialized cells. Mg(2+) serves as cofactor. Some glutamate residues at the C-terminus are polyglycylated, resulting in polyglycine chains on the gamma-carboxyl group. Glycylation is mainly limited to tubulin incorporated into axonemes (cilia and flagella) whereas glutamylation is prevalent in neuronal cells, centrioles, axonemes, and the mitotic spindle. Both modifications can coexist on the same protein on adjacent residues, and lowering polyglycylation levels increases polyglutamylation, and reciprocally. The precise function of polyglycylation is still unclear. In terms of processing, some glutamate residues at the C-terminus are polyglutamylated, resulting in polyglutamate chains on the gamma-carboxyl group. Polyglutamylation plays a key role in microtubule severing by spastin (SPAST). SPAST preferentially recognizes and acts on microtubules decorated with short polyglutamate tails: severing activity by SPAST increases as the number of glutamates per tubulin rises from one to eight, but decreases beyond this glutamylation threshold. As to expression, highly expressed in testis.

It is found in the cytoplasm. Its subcellular location is the cytoskeleton. Functionally, tubulin is the major constituent of microtubules, a cylinder consisting of laterally associated linear protofilaments composed of alpha- and beta-tubulin heterodimers. Microtubules grow by the addition of GTP-tubulin dimers to the microtubule end, where a stabilizing cap forms. Below the cap, tubulin dimers are in GDP-bound state, owing to GTPase activity of alpha-tubulin. TUBB3 plays a role in dorsal root ganglion axon projection towards the spinal cord. This is Tubulin beta-3 chain from Gallus gallus (Chicken).